Consider the following 521-residue polypeptide: T-box transcription factor TBX5 (521 aa).

Residues 1–45 (MADTEEGFGLPSTPVDSEAKELQAEAKQDPQLGTTSKAPTSPQAA) are disordered. The segment covering 17-28 (SEAKELQAEAKQ) has biased composition (basic and acidic residues). Residues 31 to 45 (QLGTTSKAPTSPQAA) show a composition bias toward polar residues. Positions 63–238 (LWLKFHEVGT…NNPFAKGFRG (176 aa)) form a DNA-binding region, T-box. Disordered stretches follow at residues 254–281 (EYPV…TRVL) and 332–352 (STTE…EEDP). The span at 262–281 (TVRQKVSSNHSPFSGETRVL) shows a compositional bias: polar residues.

Monomer. Homodimer (via the T-box); binds DNA as homodimer.

It is found in the nucleus. Its subcellular location is the cytoplasm. DNA-binding protein that regulates the transcription of several genes and is involved in heart development and limb pattern formation. May bind to the core DNA motif of promoters. The chain is T-box transcription factor TBX5 (TBX5) from Gallus gallus (Chicken).